The sequence spans 491 residues: Protein nucleotidyltransferase YdiU (491 aa).

ATP-binding residues include Gly94, Gly96, Arg97, Lys117, Asp129, Gly130, Arg180, and Arg187. The Proton acceptor role is filled by Asp256. Positions 257 and 266 each coordinate Mg(2+). Residue Asp266 coordinates ATP.

This sequence belongs to the SELO family. The cofactor is Mg(2+). It depends on Mn(2+) as a cofactor.

It carries out the reaction L-seryl-[protein] + ATP = 3-O-(5'-adenylyl)-L-seryl-[protein] + diphosphate. It catalyses the reaction L-threonyl-[protein] + ATP = 3-O-(5'-adenylyl)-L-threonyl-[protein] + diphosphate. The catalysed reaction is L-tyrosyl-[protein] + ATP = O-(5'-adenylyl)-L-tyrosyl-[protein] + diphosphate. The enzyme catalyses L-histidyl-[protein] + UTP = N(tele)-(5'-uridylyl)-L-histidyl-[protein] + diphosphate. It carries out the reaction L-seryl-[protein] + UTP = O-(5'-uridylyl)-L-seryl-[protein] + diphosphate. It catalyses the reaction L-tyrosyl-[protein] + UTP = O-(5'-uridylyl)-L-tyrosyl-[protein] + diphosphate. In terms of biological role, nucleotidyltransferase involved in the post-translational modification of proteins. It can catalyze the addition of adenosine monophosphate (AMP) or uridine monophosphate (UMP) to a protein, resulting in modifications known as AMPylation and UMPylation. The protein is Protein nucleotidyltransferase YdiU of Clostridium botulinum (strain Okra / Type B1).